The sequence spans 396 residues: Putative nickel insertion protein (396 aa).

This sequence belongs to the LarC family.

The polypeptide is Putative nickel insertion protein (Methanococcoides burtonii (strain DSM 6242 / NBRC 107633 / OCM 468 / ACE-M)).